A 206-amino-acid chain; its full sequence is Superoxide dismutase [Mn] (206 aa).

The Mn(2+) site is built by H27, H82, D168, and H172.

The protein belongs to the iron/manganese superoxide dismutase family. As to quaternary structure, homodimer. Mn(2+) is required as a cofactor.

The enzyme catalyses 2 superoxide + 2 H(+) = H2O2 + O2. Functionally, destroys superoxide anion radicals which are normally produced within the cells and which are toxic to biological systems. In Salmonella typhi, this protein is Superoxide dismutase [Mn] (sodA).